Here is a 358-residue protein sequence, read N- to C-terminus: D-alanine--D-alanine ligase B (358 aa).

Residues Lys147–Glu352 form the ATP-grasp domain. Val179–Glu234 contacts ATP. Positions 305, 319, and 321 each coordinate Mg(2+).

It belongs to the D-alanine--D-alanine ligase family. Requires Mg(2+) as cofactor. The cofactor is Mn(2+).

It is found in the cytoplasm. It carries out the reaction 2 D-alanine + ATP = D-alanyl-D-alanine + ADP + phosphate + H(+). It functions in the pathway cell wall biogenesis; peptidoglycan biosynthesis. Cell wall formation. The protein is D-alanine--D-alanine ligase B of Clostridium tetani (strain Massachusetts / E88).